We begin with the raw amino-acid sequence, 476 residues long: Siroheme synthase 1 (476 aa).

A precorrin-2 dehydrogenase /sirohydrochlorin ferrochelatase region spans residues 1 to 203 (MDYLPIFADL…GQTAEAQRQL (203 aa)). NAD(+) contacts are provided by residues 22 to 23 (EV) and 43 to 44 (QS). Phosphoserine is present on Ser-128. The interval 219-476 (GEIALVGAGP…VSRPAVVNLA (258 aa)) is uroporphyrinogen-III C-methyltransferase. Pro-228 lines the S-adenosyl-L-methionine pocket. Asp-251 (proton acceptor) is an active-site residue. The Proton donor role is filled by Lys-273. S-adenosyl-L-methionine-binding positions include 304–306 (GGD), Ile-309, 334–335 (TA), Met-386, and Gly-415.

This sequence in the N-terminal section; belongs to the precorrin-2 dehydrogenase / sirohydrochlorin ferrochelatase family. In the C-terminal section; belongs to the precorrin methyltransferase family.

The catalysed reaction is uroporphyrinogen III + 2 S-adenosyl-L-methionine = precorrin-2 + 2 S-adenosyl-L-homocysteine + H(+). It catalyses the reaction precorrin-2 + NAD(+) = sirohydrochlorin + NADH + 2 H(+). It carries out the reaction siroheme + 2 H(+) = sirohydrochlorin + Fe(2+). It participates in cofactor biosynthesis; adenosylcobalamin biosynthesis; precorrin-2 from uroporphyrinogen III: step 1/1. The protein operates within cofactor biosynthesis; adenosylcobalamin biosynthesis; sirohydrochlorin from precorrin-2: step 1/1. It functions in the pathway porphyrin-containing compound metabolism; siroheme biosynthesis; precorrin-2 from uroporphyrinogen III: step 1/1. Its pathway is porphyrin-containing compound metabolism; siroheme biosynthesis; siroheme from sirohydrochlorin: step 1/1. It participates in porphyrin-containing compound metabolism; siroheme biosynthesis; sirohydrochlorin from precorrin-2: step 1/1. Functionally, multifunctional enzyme that catalyzes the SAM-dependent methylations of uroporphyrinogen III at position C-2 and C-7 to form precorrin-2 via precorrin-1. Then it catalyzes the NAD-dependent ring dehydrogenation of precorrin-2 to yield sirohydrochlorin. Finally, it catalyzes the ferrochelation of sirohydrochlorin to yield siroheme. The protein is Siroheme synthase 1 of Serratia proteamaculans (strain 568).